The sequence spans 316 residues: Glycine--tRNA ligase alpha subunit (316 aa).

Belongs to the class-II aminoacyl-tRNA synthetase family. As to quaternary structure, tetramer of two alpha and two beta subunits.

It is found in the cytoplasm. It catalyses the reaction tRNA(Gly) + glycine + ATP = glycyl-tRNA(Gly) + AMP + diphosphate. The polypeptide is Glycine--tRNA ligase alpha subunit (Paracoccus denitrificans (strain Pd 1222)).